We begin with the raw amino-acid sequence, 618 residues long: Manganese lipoxygenase (618 aa).

The first 16 residues, 1–16, serve as a signal peptide directing secretion; the sequence is MRSRILAIVFAARHVA. Residues 36 to 45 are compositionally biased toward low complexity; the sequence is SSTTVLPSPT. Residues 36–58 form a disordered region; the sequence is SSTTVLPSPTQYTLPNNDPNQGA. Residues 46 to 58 are compositionally biased toward polar residues; sequence QYTLPNNDPNQGA. The Lipoxygenase domain occupies 47–618; the sequence is YTLPNNDPNQ…PAVNPFFLSV (572 aa). 5 N-linked (GlcNAc...) asparagine glycosylation sites follow: Asn60, Asn91, Asn106, Asn116, and Asn157. Positions 290, 294, 478, and 482 each coordinate Mn(2+). Asn513 carries N-linked (GlcNAc...) asparagine glycosylation. Residue Val618 coordinates Mn(2+).

This sequence belongs to the lipoxygenase family. Manganese lipoxygenase subfamily. It depends on Mn(2+) as a cofactor. In terms of processing, N- and O-glycosylated.

The protein localises to the secreted. It carries out the reaction (9Z,12Z)-octadecadienoate + O2 = (11S)-hydroperoxy-(9Z,12Z)-octadecadienoate. The catalysed reaction is (9Z,12Z)-octadecadienoate + O2 = (13R)-hydroperoxy-(9Z,11E)-octadecadienoate. It catalyses the reaction (9Z,12Z,15Z)-octadecatrienoate + O2 = (11S)-hydroperoxy-(9Z,12Z,15Z)-octadecatrienoate. The enzyme catalyses (9Z,12Z,15Z)-octadecatrienoate + O2 = (13R)-hydroperoxy-(9Z,11E,15Z)-octadecatrienoate. In terms of biological role, lipoxygenase that metabolizes linoleic and alpha-linolenic acids to 11S- and 13R-hydroperoxy fatty acids. At the end of lipoxygenation, the intermediate product 11S-HPODE from linoleic acid is then transformed into 13R-HPODE as the final product. It also acts on alpha-linolenic acid producing 11S-HPOTrE and 13R-HPOTrE with subsequent transformation of 11S-HPOTrE to 13R-HPOTrE as final product. The polypeptide is Manganese lipoxygenase (Gaeumannomyces avenae (Oat take-all root rot fungus)).